Reading from the N-terminus, the 140-residue chain is 3-hydroxyacyl-[acyl-carrier-protein] dehydratase FabZ (140 aa).

His48 is an active-site residue.

The protein belongs to the thioester dehydratase family. FabZ subfamily.

It is found in the cytoplasm. The enzyme catalyses a (3R)-hydroxyacyl-[ACP] = a (2E)-enoyl-[ACP] + H2O. Involved in unsaturated fatty acids biosynthesis. Catalyzes the dehydration of short chain beta-hydroxyacyl-ACPs and long chain saturated and unsaturated beta-hydroxyacyl-ACPs. The polypeptide is 3-hydroxyacyl-[acyl-carrier-protein] dehydratase FabZ (Ligilactobacillus salivarius (strain UCC118) (Lactobacillus salivarius)).